A 92-amino-acid chain; its full sequence is Small ribosomal subunit protein uS19 (92 aa).

Belongs to the universal ribosomal protein uS19 family.

Functionally, protein S19 forms a complex with S13 that binds strongly to the 16S ribosomal RNA. The protein is Small ribosomal subunit protein uS19 of Phenylobacterium zucineum (strain HLK1).